A 159-amino-acid polypeptide reads, in one-letter code: Transcriptional repressor NrdR (159 aa).

The span at 1–11 (MQCPTCQNTDS) shows a compositional bias: polar residues. Positions 1–21 (MQCPTCQNTDSRVLESRSADS) are disordered. A zinc finger spans residues 3–34 (CPTCQNTDSRVLESRSADSGKSVRRRRECLNC). Residues 49–139 (VSVLKKDGSR…VYRKFNGVKD (91 aa)) form the ATP-cone domain.

Belongs to the NrdR family. Zn(2+) serves as cofactor.

In terms of biological role, negatively regulates transcription of bacterial ribonucleotide reductase nrd genes and operons by binding to NrdR-boxes. This Prochlorococcus marinus (strain MIT 9301) protein is Transcriptional repressor NrdR.